The sequence spans 325 residues: Replication factor C small subunit (325 aa).

Residue 44–51 (GPPGTGKT) coordinates ATP.

The protein belongs to the activator 1 small subunits family. RfcS subfamily. As to quaternary structure, heteromultimer composed of small subunits (RfcS) and large subunits (RfcL).

Part of the RFC clamp loader complex which loads the PCNA sliding clamp onto DNA. In Thermofilum pendens (strain DSM 2475 / Hrk 5), this protein is Replication factor C small subunit.